Consider the following 465-residue polypeptide: Polyadenylation factor subunit 2 (465 aa).

Low complexity predominate over residues 1 to 20 (MDGHNQNQYQNQNQIQQSQQ). The tract at residues 1–26 (MDGHNQNQYQNQNQIQQSQQPPLKKY) is disordered. WD repeat units lie at residues 133 to 163 (AHDS…KIWQ), 175 to 205 (AHTE…KIWN), 217 to 247 (GHHW…KLWD), 259 to 290 (KFKH…RVFD), and 348 to 378 (AHDK…RFWT). The tract at residues 417–465 (EFGAAPPPPATLEPHALPNMNGFINKKPRQEIPGIDSNIKSSTLPGLSI) is disordered. A compositionally biased stretch (polar residues) spans 454-465 (NIKSSTLPGLSI).

Component of the cleavage and polyadenylation factor (CPF) complex, which is composed of at least PTI1, SYC1, SSU72, GLC7, MPE1, REF2, PFS2, PTA1, YSH1/BRR5, SWD2, CFT2/YDH1, YTH1, CFT1/YHH1, FIP1 and PAP1. Interacts with YSH1/BRR5, FIP1 and RNA14.

Its subcellular location is the nucleus. Integral and essential component of the cleavage and polyadenylation factor (CPF) complex, which plays a key role in polyadenylation-dependent pre-mRNA 3'-end formation and cooperates with cleavage factors including the CFIA complex and NAB4/CFIB. May bridge the CPF and CFIA complexes. In Saccharomyces cerevisiae (strain ATCC 204508 / S288c) (Baker's yeast), this protein is Polyadenylation factor subunit 2 (PFS2).